The sequence spans 252 residues: Small ribosomal subunit protein uS2 (252 aa).

This sequence belongs to the universal ribosomal protein uS2 family.

The chain is Small ribosomal subunit protein uS2 from Alcanivorax borkumensis (strain ATCC 700651 / DSM 11573 / NCIMB 13689 / SK2).